Consider the following 146-residue polypeptide: Transcription initiation factor TFIID subunit 10b (146 aa).

A disordered region spans residues 16–43 (GASSHGQSSGGGGGGDRDRTTPSSHLSD).

Belongs to the TAF10 family. Belongs to the TFIID complex which is composed of TATA binding protein (Tbp) and a number of TBP-associated factors (TAFs). The N-terminus interacts with the histone fold of Taf8. As to expression, at embryonic stage 9, expression is seen in the mesodermal layer and midgut primordia. The mesoderm-specific expression persists in later stages of development and at its highest level is detected in midgut, hindgut, and differentiating somatic muscle fibers. Coexpressed with Taf10 in the lateral epidermis and anal plate.

Its subcellular location is the cytoplasm. It is found in the nucleus. TFIID is a multimeric protein complex that plays a central role in mediating promoter responses to various activators and repressors. The chain is Transcription initiation factor TFIID subunit 10b from Drosophila melanogaster (Fruit fly).